The primary structure comprises 965 residues: Meiosis-specific coiled-coil domain-containing protein MEIOC (965 aa).

Disordered stretches follow at residues 1 to 22 (MEVSGGDTCRPRHPQGLREGPE) and 946 to 965 (VHESINSSNPMNQRGETSKH). Residues 949-965 (SINSSNPMNQRGETSKH) are compositionally biased toward polar residues.

As to quaternary structure, interacts with YTHDC2; binds transcripts that regulate the mitotic cell cycle inhibiting progression into metaphase, thereby allowing meiotic prophase to proceed normally. Interacts with RBM46. In terms of tissue distribution, expressed specifically in fetal ovary and postnatal and adult testes (at protein level). In adult testis expressed in spermatocytes, beginning in preleptotene and extending through most stages of meiotic prophase I, including leptotene, zygotene, and pachytene.

Its subcellular location is the cytoplasm. It is found in the nucleus. Is required for meiosis completion in both male and female germ cells. Confers stability to numerous meiotic mRNAs in gonads allowing proper initiation and progression into meiosis prophase I. The function may involve YTHDC2 and is independent of induction by retinoic acid (RA). Maintains an extended meiotic prophase I by properly promoting the transition from a mitotic to a meiotic cell cycle program by binding transcripts through its interaction with YTHDC2 that regulate the mitotic cell cycle. In Mus musculus (Mouse), this protein is Meiosis-specific coiled-coil domain-containing protein MEIOC.